Consider the following 144-residue polypeptide: Putative pre-16S rRNA nuclease (144 aa).

The protein belongs to the YqgF nuclease family.

It localises to the cytoplasm. In terms of biological role, could be a nuclease involved in processing of the 5'-end of pre-16S rRNA. The chain is Putative pre-16S rRNA nuclease from Picosynechococcus sp. (strain ATCC 27264 / PCC 7002 / PR-6) (Agmenellum quadruplicatum).